The sequence spans 314 residues: MGERGPDQWLEQIKNCISLSESDMKQLCELVKELLMEESNIQPVQSPVTVCGDIHGQFHDLLELFRTAGGLPSDDNQTNFIFLGDYVDRGYFSLETFTLLMVLKVKYPHRITLVRGNHESRQITQVYGFYEECLTKYGSTTVWKYCCQVFDFLTLAAIIDGKILCVHGGLSPEIRMLDQIRVLSRAQEVPHEGGFCDLVWSDPDNIDTWAVSPRGAGWLFGSKVSREFNHINNLQLIARAHQLVMEGFRYHFKEKDVVTVWSAPNYCYRCGNVASVMQVDEDLEPNFKIFSAVQDGDLSVKNNANKQQRSDYFL.

Residues Asp-53, His-55, Asp-85, and Asn-117 each contribute to the Mn(2+) site. His-118 acts as the Proton donor in catalysis. Residues His-167 and His-241 each contribute to the Mn(2+) site.

It belongs to the PPP phosphatase family. PP-6 (PP-V) subfamily. Interacts with MDS3. Mn(2+) is required as a cofactor.

It is found in the cytoplasm. It catalyses the reaction O-phospho-L-seryl-[protein] + H2O = L-seryl-[protein] + phosphate. It carries out the reaction O-phospho-L-threonyl-[protein] + H2O = L-threonyl-[protein] + phosphate. Serine/threonine protein phosphatase which is involved in the dephosphorylation of the large subunit of RNA polymerase II. Is required in late G1 for normal G1 cyclin expression, bud initiation and expression of certain genes that are periodically expressed during late G1. Plays a role during hyphal growth through the regulation of cell wall biogenesis, osmosensing and protein translation. Involved in virulence in a mouse systemic infection model. The protein is Serine/threonine-protein phosphatase SIT4 (SIT4) of Candida albicans (strain SC5314 / ATCC MYA-2876) (Yeast).